Consider the following 243-residue polypeptide: UPF0758 protein SYNPCC7002_A0220 (243 aa).

Positions 112–235 constitute an MPN domain; it reads IIVDSPEAAA…FGSLRQKTAL (124 aa). Positions 184, 186, and 197 each coordinate Zn(2+). The JAMM motif motif lies at 184–197; the sequence is HNHPSGNVDPSPED.

Belongs to the UPF0758 family.

The chain is UPF0758 protein SYNPCC7002_A0220 from Picosynechococcus sp. (strain ATCC 27264 / PCC 7002 / PR-6) (Agmenellum quadruplicatum).